The chain runs to 83 residues: Small ribosomal subunit protein uS17 (83 aa).

It belongs to the universal ribosomal protein uS17 family. In terms of assembly, part of the 30S ribosomal subunit.

Its function is as follows. One of the primary rRNA binding proteins, it binds specifically to the 5'-end of 16S ribosomal RNA. This chain is Small ribosomal subunit protein uS17, found in Gloeobacter violaceus (strain ATCC 29082 / PCC 7421).